We begin with the raw amino-acid sequence, 463 residues long: Dopaminechrome tautomerase (463 aa).

The protein belongs to the major royal jelly protein family.

It is found in the secreted. It catalyses the reaction dopaminechrome = 5,6-dihydroxyindole. Its pathway is pigment biosynthesis; melanin biosynthesis. Its function is as follows. Catalyzes the conversion of dopaminechrome to 5,6-dihydroxyindole in the eumelanin biosynthetic pathway originating from dopamine. Catalyzes tautomerization of dopaminechrome to 5,6-dihydroxyindole during eumelanin biosynthesis. Acts both dopaminechrome and N-methyl dopaminechrome but not on dopachrome or other aminochromes tested. The polypeptide is Dopaminechrome tautomerase (Drosophila melanogaster (Fruit fly)).